Consider the following 440-residue polypeptide: Doublesex- and mab-3-related transcription factor A2 (440 aa).

Positions 59–106 (CARCRNHGVVSALKGHKRYCRWKDCMCAKCTLIAERQRVMAAQVALRR) form a DNA-binding region, DM. The segment at 167–261 (PKTPLPGTVT…SPSSAASRQM (95 aa)) is disordered. Positions 199 to 213 (DMRHGSGSENGDRES) are enriched in basic and acidic residues. Over residues 229–241 (TPGSISPIGSDSG) the composition is skewed to low complexity. The span at 251-261 (PSPSSAASRQM) shows a compositional bias: polar residues. Residues 261–296 (MNAIDILTRVFPNHKRSVLELVLQGCGKNVVQAIEQ) form the DMA domain.

This sequence belongs to the DMRT family. In terms of tissue distribution, restrictively expressed in brain and developing germ cells, especially in spermatogonia, spermatocytes, spermatids, and sperm cells, and in developing oocytes, including early perinucleolus stage oocyte, late yolk vesicle stage oocyte, and oil drop stage oocyte.

Its subcellular location is the nucleus. May be involved in sexual development. The sequence is that of Doublesex- and mab-3-related transcription factor A2 (dmrta2) from Danio rerio (Zebrafish).